Here is a 165-residue protein sequence, read N- to C-terminus: UI (165 aa).

Residues 1 to 18 form the signal peptide; that stretch reads MKPVPLILLLATVLLSSH. Valine 163 carries the post-translational modification Valine amide.

The protein belongs to the sauvagine/corticotropin-releasing factor/urotensin I family.

The protein resides in the secreted. Urotensin is found in the teleost caudal neurosecretory system. It has a suggested role in osmoregulation and as a corticotropin-releasing factor. The non-hormonal portion of this precursor may be a urotensin binding protein, urophysin. The polypeptide is UI (Oncorhynchus mykiss (Rainbow trout)).